The chain runs to 538 residues: CWF19-like protein 1 (538 aa).

2 disordered regions span residues 259-278 and 298-324; these read PDVT…TGKQ and QGRK…PPQP.

The protein belongs to the CWF19 family.

The protein is CWF19-like protein 1 (CWF19L1) of Pongo abelii (Sumatran orangutan).